We begin with the raw amino-acid sequence, 339 residues long: Lipoate-protein ligase A (339 aa).

A BPL/LPL catalytic domain is found at 29 to 217 (PKKQSILFLW…AFFQHYGMKV (189 aa)). Residues Arg-71, 76 to 79 (GAVF), and Lys-135 contribute to the ATP site. Lys-135 is a (R)-lipoate binding site.

Belongs to the LplA family. As to quaternary structure, monomer.

The protein resides in the cytoplasm. The enzyme catalyses L-lysyl-[lipoyl-carrier protein] + (R)-lipoate + ATP = N(6)-[(R)-lipoyl]-L-lysyl-[lipoyl-carrier protein] + AMP + diphosphate + H(+). The protein operates within protein modification; protein lipoylation via exogenous pathway; protein N(6)-(lipoyl)lysine from lipoate: step 1/2. Its pathway is protein modification; protein lipoylation via exogenous pathway; protein N(6)-(lipoyl)lysine from lipoate: step 2/2. Catalyzes both the ATP-dependent activation of exogenously supplied lipoate to lipoyl-AMP and the transfer of the activated lipoyl onto the lipoyl domains of lipoate-dependent enzymes. This Blochmanniella pennsylvanica (strain BPEN) protein is Lipoate-protein ligase A.